A 98-amino-acid polypeptide reads, in one-letter code: NADH-ubiquinone oxidoreductase chain 4L (98 aa).

Helical transmembrane passes span 1–21 (MTPT…GMLT), 29–49 (SLLC…LIAL), and 61–81 (IILL…LVSI).

This sequence belongs to the complex I subunit 4L family. In terms of assembly, core subunit of respiratory chain NADH dehydrogenase (Complex I) which is composed of 45 different subunits.

It localises to the mitochondrion inner membrane. The catalysed reaction is a ubiquinone + NADH + 5 H(+)(in) = a ubiquinol + NAD(+) + 4 H(+)(out). Its function is as follows. Core subunit of the mitochondrial membrane respiratory chain NADH dehydrogenase (Complex I) which catalyzes electron transfer from NADH through the respiratory chain, using ubiquinone as an electron acceptor. Part of the enzyme membrane arm which is embedded in the lipid bilayer and involved in proton translocation. The chain is NADH-ubiquinone oxidoreductase chain 4L (MT-ND4L) from Macaca pagensis (Mentawai macaque).